A 156-amino-acid polypeptide reads, in one-letter code: Ribosomal RNA large subunit methyltransferase H (156 aa).

Residues Leu-73, Gly-104, and 123 to 128 each bind S-adenosyl-L-methionine; that span reads LSPLTL.

It belongs to the RNA methyltransferase RlmH family. Homodimer.

Its subcellular location is the cytoplasm. The catalysed reaction is pseudouridine(1915) in 23S rRNA + S-adenosyl-L-methionine = N(3)-methylpseudouridine(1915) in 23S rRNA + S-adenosyl-L-homocysteine + H(+). In terms of biological role, specifically methylates the pseudouridine at position 1915 (m3Psi1915) in 23S rRNA. This is Ribosomal RNA large subunit methyltransferase H from Sodalis glossinidius (strain morsitans).